Reading from the N-terminus, the 606-residue chain is Ubiquitin carboxyl-terminal hydrolase 2 (606 aa).

A necessary for interaction with MDM4 region spans residues 1–201 (MSQLSSTLKR…RSEYLADYLE (201 aa)). 2 disordered regions span residues 53-112 (PSPP…GGSG) and 207-228 (ASAPQVPTPTPPSRAPEVLSPT). Residues 90-100 (KRAESQTRGTE) are compositionally biased toward basic and acidic residues. The USP domain occupies 268–600 (AGLRNLGNTC…DAYLLFYELA (333 aa)). Residue Cys-277 is the Nucleophile of the active site. The tract at residues 404 to 504 (YLEREDSRIG…FPKILVLHLK (101 aa)) is necessary for interaction with MDM4. 4 residues coordinate Zn(2+): Cys-426, Cys-429, Cys-477, and Cys-480. His-558 functions as the Proton acceptor in the catalytic mechanism.

The protein belongs to the peptidase C19 family. USP2 subfamily. As to quaternary structure, homooligomer. Found in trimeric complex with MDM2 and MDM4 and USP2. Interacts with CCND1; the interaction is direct and promotes its stabilization by antagonizing ubiquitin-dependent degradation. Interacts (via N-terminus and C-terminus) with MDM2. Interacts with MDM4 and PER1. Interacts with KCNQ1; counteracts the NEDD4L-specific down-regulation of I(Ks) and restores plasma membrane localization of KCNQ1.

It localises to the cytoplasm. Its subcellular location is the perinuclear region. The enzyme catalyses Thiol-dependent hydrolysis of ester, thioester, amide, peptide and isopeptide bonds formed by the C-terminal Gly of ubiquitin (a 76-residue protein attached to proteins as an intracellular targeting signal).. With respect to regulation, cleavage is inhibited by ubiquitin in a dosage-dependent manner. Cleavage is blocked by ubiquitin aldehyde. Its function is as follows. Hydrolase that deubiquitinates polyubiquitinated target proteins such as MDM2, MDM4 and CCND1. Possesses both ubiquitin-specific peptidase and isopeptidase activities. Deubiquitinates MDM2 without reversing MDM2-mediated p53/TP53 ubiquitination and thus indirectly promotes p53/TP53 degradation and limits p53 activity. Has no deubiquitinase activity against p53/TP53. Prevents MDM2-mediated degradation of MDM4. Plays a role in the G1/S cell-cycle progression in normal and cancer cells. Plays a role in the regulation of myogenic differentiation of embryonic muscle cells. Regulates the circadian clock by modulating its intrinsic circadian rhythm and its capacity to respond to external cues. Associates with clock proteins and deubiquitinates core clock component PER1 but does not affect its overall stability. Regulates the nucleocytoplasmic shuttling and nuclear retention of PER1 and its repressive role on the clock transcription factors CLOCK and BMAL1. The polypeptide is Ubiquitin carboxyl-terminal hydrolase 2 (USP2) (Bos taurus (Bovine)).